The following is a 628-amino-acid chain: Rac GTPase-activating protein 1 (628 aa).

Met-1 carries the post-translational modification N-acetylmethionine. Residues 33 to 110 are a coiled coil; it reads QVVKDFEDFR…IQLIRDILMC (78 aa). Positions 107–286 are interaction with SLC26A8; that stretch reads ILMCDTSGSI…GTPQNTGGMR (180 aa). Phosphoserine; by PLK1 is present on Ser-150. Ser-155 is modified (phosphoserine). Ser-158 carries the phosphoserine; by PLK1 modification. Thr-162 carries the post-translational modification Phosphothreonine. Phosphoserine; by PLK1 occurs at positions 165 and 171. The disordered stretch occupies residues 179–201; sequence KKREKRRSNSRQFIDGPPGPVKK. Phosphoserine is present on residues Ser-204, Ser-207, and Ser-215. Positions 242–284 are disordered; that stretch reads SWTRSRGKSGPLQPVNSDSALNSRPLEPRTDTDNLGTPQNTGG. A Glycyl lysine isopeptide (Lys-Gly) (interchain with G-Cter in SUMO2) cross-link involves residue Lys-249. A Phosphoserine modification is found at Ser-258. The segment covering 274 to 283 has biased composition (polar residues); sequence DNLGTPQNTG. The Phorbol-ester/DAG-type zinc-finger motif lies at 287 to 336; sequence LHDFVSKTVIKPESCVPCGKRIKFGKLSLKCRDCRLVSHPECRDRCPLPC. At Thr-343 the chain carries Phosphothreonine. Residues 350–540 enclose the Rho-GAP domain; it reads GMLADFVSQA…RLLSLPLEYW (191 aa). Ser-388 carries the phosphoserine; by AURKB modification. Residue Lys-405 forms a Glycyl lysine isopeptide (Lys-Gly) (interchain with G-Cter in SUMO2) linkage. A Phosphoserine; by AURKB modification is found at Ser-411. Thr-564, Thr-577, Thr-585, and Thr-602 each carry phosphothreonine.

As to quaternary structure, heterotetramer of two molecules each of RACGAP1 and KIF23. Found in the centralspindlin complex. Associates with alpha-, beta- and gamma-tubulin and microtubules. Interacts via its Rho-GAP domain with RND2. Associates with AURKB during M phase. Interacts via its Rho-GAP domain and basic region with PRC1. The interaction with PRC1 inhibits its GAP activity towards CDC42 in vitro, which may be required for maintaining normal spindle morphology. Interacts with SLC26A8 via its N-terminus. Interacts with ECT2; the interaction is direct, occurs at anaphase and during cytokinesis in a microtubule-dependent manner, is enhanced by phosphorylation by PLK1 and phosphorylation at Ser-165 plays a major role in mediating binding. Interacts with RAB11FIP3; the interaction occurs at late telophase. Interacts with KIF23; the interaction is direct. In terms of processing, phosphorylated at multiple sites in the midbody during cytokinesis. Phosphorylation by AURKB on Ser-388 at the midbody is, at least in part, responsible for exerting its latent GAP activity towards RhoA. Phosphorylation on multiple serine residues by PLK1 enhances its association with ECT2 and is critical for cleavage furrow formation. Phosphorylation on Ser-165 plays a major role in mediating interaction with ECT2. Phosphorylation on Ser-158 does not appear to contribute to binding to ECT2. In terms of tissue distribution, highly expressed in testis, thymus and spleen and weakly expressed in brain, heart, skeletal muscle and kidney. In testis, expression is restricted to germ cells with the highest levels of expression found in spermatocytes. Not detected in adult liver. Also expressed in fetal liver and in several hematopoietic cell lines.

Its subcellular location is the nucleus. It localises to the cytoplasm. The protein localises to the cytoskeleton. It is found in the spindle. The protein resides in the cytoplasmic vesicle. Its subcellular location is the secretory vesicle. It localises to the acrosome. The protein localises to the cleavage furrow. It is found in the midbody. The protein resides in the midbody ring. Its subcellular location is the cell membrane. Component of the centralspindlin complex that serves as a microtubule-dependent and Rho-mediated signaling required for the myosin contractile ring formation during the cell cycle cytokinesis. Required for proper attachment of the midbody to the cell membrane during cytokinesis. Sequentially binds to ECT2 and RAB11FIP3 which regulates cleavage furrow ingression and abscission during cytokinesis. Plays key roles in controlling cell growth and differentiation of hematopoietic cells through mechanisms other than regulating Rac GTPase activity. Has a critical role in erythropoiesis. Also involved in the regulation of growth-related processes in adipocytes and myoblasts. May be involved in regulating spermatogenesis and in the RACGAP1 pathway in neuronal proliferation. Shows strong GAP (GTPase activation) activity towards CDC42 and RAC1 and less towards RHOA. Essential for the early stages of embryogenesis. May play a role in regulating cortical activity through RHOA during cytokinesis. May participate in the regulation of sulfate transport in male germ cells. The protein is Rac GTPase-activating protein 1 of Mus musculus (Mouse).